The sequence spans 101 residues: Protein Tat (101 aa).

Over residues 1 to 12 (MEPVDPRLEPWK) the composition is skewed to basic and acidic residues. The tract at residues 1–20 (MEPVDPRLEPWKHPGSQPKT) is disordered. The tract at residues 1–24 (MEPVDPRLEPWKHPGSQPKTACTT) is interaction with human CREBBP. The transactivation stretch occupies residues 1-48 (MEPVDPRLEPWKHPGSQPKTACTTCYCKKCCFHCQVCFTKKALGISYG). Zn(2+) is bound by residues Cys-22, Cys-25, and Cys-27. Residues 22-37 (CTTCYCKKCCFHCQVC) form a cysteine-rich region. Lys-28 is modified (N6-acetyllysine; by host PCAF). Zn(2+) contacts are provided by Cys-30, His-33, Cys-34, and Cys-37. Residues 38–48 (FTKKALGISYG) are core. The disordered stretch occupies residues 47–101 (YGRKKRRQRRRAPEDSQTHQVSLPKQPAPQFRGDPTGPKESKKKVERETETHPVD). The Nuclear localization signal, RNA-binding (TAR), and protein transduction signature appears at 49–57 (RKKRRQRRR). Residues 49–86 (RKKRRQRRRAPEDSQTHQVSLPKQPAPQFRGDPTGPKE) form an interaction with the host capping enzyme RNGTT region. An N6-acetyllysine; by host EP300 and GCN5L2 mark is found at Lys-50 and Lys-51. An asymmetric dimethylarginine; by host PRMT6 mark is found at Arg-52 and Arg-53. Lys-71 participates in a covalent cross-link: Glycyl lysine isopeptide (Lys-Gly) (interchain with G-Cter in ubiquitin). The short motif at 78 to 80 (RGD) is the Cell attachment site element. The segment covering 83-101 (GPKESKKKVERETETHPVD) has biased composition (basic and acidic residues).

The protein belongs to the lentiviruses Tat family. In terms of assembly, interacts with host CCNT1. Associates with the P-TEFb complex composed at least of Tat, P-TEFb (CDK9 and CCNT1), TAR RNA, RNA Pol II. Recruits the HATs CREBBP, TAF1/TFIID, EP300, PCAF and GCN5L2. Interacts with host KAT5/Tip60; this interaction targets the latter to degradation. Interacts with the host deacetylase SIRT1. Interacts with host capping enzyme RNGTT; this interaction stimulates RNGTT. Binds to host KDR, and to the host integrins ITGAV/ITGB3 and ITGA5/ITGB1. Interacts with host KPNB1/importin beta-1 without previous binding to KPNA1/importin alpha-1. Interacts with EIF2AK2. Interacts with host nucleosome assembly protein NAP1L1; this interaction may be required for the transport of Tat within the nucleus, since the two proteins interact at the nuclear rim. Interacts with host C1QBP/SF2P32; this interaction involves lysine-acetylated Tat. Interacts with the host chemokine receptors CCR2, CCR3 and CXCR4. Interacts with host DPP4/CD26; this interaction may trigger an anti-proliferative effect. Interacts with host LDLR. Interacts with the host extracellular matrix metalloproteinase MMP1. Interacts with host PRMT6; this interaction mediates Tat's methylation. Interacts with, and is ubiquitinated by MDM2/Hdm2. Interacts with host PSMC3 and HTATIP2. Interacts with STAB1; this interaction may overcome SATB1-mediated repression of IL2 and IL2RA (interleukin) in T cells by binding to the same domain than HDAC1. Interacts (when acetylated) with human CDK13, thereby increasing HIV-1 mRNA splicing and promoting the production of the doubly spliced HIV-1 protein Nef. Interacts with host TBP; this interaction modulates the activity of transcriptional pre-initiation complex. Interacts with host RELA. Interacts with host PLSCR1; this interaction negatively regulates Tat transactivation activity by altering its subcellular distribution. Asymmetrical arginine methylation by host PRMT6 seems to diminish the transactivation capacity of Tat and affects the interaction with host CCNT1. In terms of processing, acetylation by EP300, CREBBP, GCN5L2/GCN5 and PCAF regulates the transactivation activity of Tat. EP300-mediated acetylation of Lys-50 promotes dissociation of Tat from the TAR RNA through the competitive binding to PCAF's bromodomain. In addition, the non-acetylated Tat's N-terminus can also interact with PCAF. PCAF-mediated acetylation of Lys-28 enhances Tat's binding to CCNT1. Lys-50 is deacetylated by SIRT1. Post-translationally, polyubiquitination by host MDM2 does not target Tat to degradation, but activates its transactivation function and fosters interaction with CCNT1 and TAR RNA. Phosphorylated by EIF2AK2 on serine and threonine residues adjacent to the basic region important for TAR RNA binding and function. Phosphorylation of Tat by EIF2AK2 is dependent on the prior activation of EIF2AK2 by dsRNA.

It is found in the host nucleus. Its subcellular location is the host nucleolus. The protein localises to the host cytoplasm. The protein resides in the secreted. Its function is as follows. Transcriptional activator that increases RNA Pol II processivity, thereby increasing the level of full-length viral transcripts. Recognizes a hairpin structure at the 5'-LTR of the nascent viral mRNAs referred to as the transactivation responsive RNA element (TAR) and recruits the cyclin T1-CDK9 complex (P-TEFb complex) that will in turn hyperphosphorylate the RNA polymerase II to allow efficient elongation. The CDK9 component of P-TEFb and other Tat-activated kinases hyperphosphorylate the C-terminus of RNA Pol II that becomes stabilized and much more processive. Other factors such as HTATSF1/Tat-SF1, SUPT5H/SPT5, and HTATIP2 are also important for Tat's function. Besides its effect on RNA Pol II processivity, Tat induces chromatin remodeling of proviral genes by recruiting the histone acetyltransferases (HATs) CREBBP, EP300 and PCAF to the chromatin. This also contributes to the increase in proviral transcription rate, especially when the provirus integrates in transcriptionally silent region of the host genome. To ensure maximal activation of the LTR, Tat mediates nuclear translocation of NF-kappa-B by interacting with host RELA. Through its interaction with host TBP, Tat may also modulate transcription initiation. Tat can reactivate a latently infected cell by penetrating in it and transactivating its LTR promoter. In the cytoplasm, Tat is thought to act as a translational activator of HIV-1 mRNAs. Functionally, extracellular circulating Tat can be endocytosed by surrounding uninfected cells via the binding to several surface receptors such as CD26, CXCR4, heparan sulfate proteoglycans (HSPG) or LDLR. Neurons are rarely infected, but they internalize Tat via their LDLR. Through its interaction with nuclear HATs, Tat is potentially able to control the acetylation-dependent cellular gene expression. Modulates the expression of many cellular genes involved in cell survival, proliferation or in coding for cytokines or cytokine receptors. Tat plays a role in T-cell and neurons apoptosis. Tat induced neurotoxicity and apoptosis probably contribute to neuroAIDS. Circulating Tat also acts as a chemokine-like and/or growth factor-like molecule that binds to specific receptors on the surface of the cells, affecting many cellular pathways. In the vascular system, Tat binds to ITGAV/ITGB3 and ITGA5/ITGB1 integrins dimers at the surface of endothelial cells and competes with bFGF for heparin-binding sites, leading to an excess of soluble bFGF. The protein is Protein Tat of Human immunodeficiency virus type 1 group M subtype B (isolate MN) (HIV-1).